The following is a 208-amino-acid chain: LexA repressor (208 aa).

The segment at residues 29-49 (VREICGAVGLSSTSTVHGHIN) is a DNA-binding region (H-T-H motif). Active-site for autocatalytic cleavage activity residues include serine 129 and lysine 167.

Belongs to the peptidase S24 family. As to quaternary structure, homodimer.

The enzyme catalyses Hydrolysis of Ala-|-Gly bond in repressor LexA.. Its function is as follows. Represses a number of genes involved in the response to DNA damage (SOS response), including recA and lexA. In the presence of single-stranded DNA, RecA interacts with LexA causing an autocatalytic cleavage which disrupts the DNA-binding part of LexA, leading to derepression of the SOS regulon and eventually DNA repair. This is LexA repressor from Limosilactobacillus fermentum (strain NBRC 3956 / LMG 18251) (Lactobacillus fermentum).